The primary structure comprises 245 residues: Large ribosomal subunit protein uL29m (245 aa).

2 stretches are compositionally biased toward low complexity: residues 36–49 (SFNS…TSSS) and 234–245 (STKSETTTSKNI). 2 disordered regions span residues 36–98 (SFNS…NPDH) and 207–245 (RPSP…SKNI).

This sequence belongs to the universal ribosomal protein uL29 family. In terms of assembly, component of the mitochondrial large ribosomal subunit. Mature mitochondrial ribosomes consist of a small (37S) and a large (54S) subunit. The 37S subunit contains at least 33 different proteins and 1 molecule of RNA (15S). The 54S subunit contains at least 45 different proteins and 1 molecule of RNA (21S).

The protein resides in the mitochondrion. This Coccidioides immitis (strain RS) (Valley fever fungus) protein is Large ribosomal subunit protein uL29m (MRPL4).